Consider the following 252-residue polypeptide: tRNA pseudouridine synthase A (252 aa).

Residue Asp52 is the Nucleophile of the active site. Residue Tyr112 participates in substrate binding.

It belongs to the tRNA pseudouridine synthase TruA family. In terms of assembly, homodimer.

It catalyses the reaction uridine(38/39/40) in tRNA = pseudouridine(38/39/40) in tRNA. In terms of biological role, formation of pseudouridine at positions 38, 39 and 40 in the anticodon stem and loop of transfer RNAs. This chain is tRNA pseudouridine synthase A, found in Porphyromonas gingivalis (strain ATCC 33277 / DSM 20709 / CIP 103683 / JCM 12257 / NCTC 11834 / 2561).